The sequence spans 137 residues: Hydrogenase-4 component J (137 aa).

The protein to E.coli HycH.

Possible component of hydrogenase 4. This is Hydrogenase-4 component J from Escherichia coli (strain K12).